Consider the following 528-residue polypeptide: QDRPIKFSTEGATSQSYKQFIEALRERLRGGLIHDIPVLPDPTTLQERNRYITVELSNSDTESIEVGIDVTNAYVVAYRAGTQSYFLRDAPSSASDYLFTGTDQHSLPFYGTYGDLERWAHQSRQQIPLGLQALTHGISFFRSGGNDNEEKARTLIVIIQMVAEAARFRYISNRVRVSIQTGTAFQPDAAMISLENNWDNLSRGVQESVQDTFPNQVTLTNIRNEPVIVDSLSHPTVAVLALMLFVCNPPNANQSPLLIRSIVEKSKICSSRYEPTVRIGGRDGMCVDVYDNGYHNGNRIIMWKCKDRLEENQLWTLKSDKTIRSNGKCLTTYGYAPGSYVMIYDCTSAVAEATYWEIWDNGTIINPKSALVLSAESSSMGGTLTVQTNEYLMRQGWRTGNNTSPFVTSISGYSDLCMQAQGSNVWMADCDSNKKEQQWALYTDGSIRSVQNTNNCLTSKDHKQGSTILLMGCSNGWASQRWVFKNDGSIYSLYDDMVMDVKGSDPSLKQIILWPYTGKPNQIWLTLF.

Position 1 is a pyrrolidone carboxylic acid (Gln1). Glu164 is an active-site residue. 3 disulfides stabilise this stretch: Cys247-Cys269, Cys286-Cys305, and Cys329-Cys346. Residues 273 to 400 (YEPTVRIGGR…YLMRQGWRTG (128 aa)) form the Ricin B-type lectin 1 domain. Residues 283–325 (DGMCVDVYDNGYHNGNRIIMWKCKDRLEENQLWTLKSDKTIRS) form a 1-alpha repeat. A 1-beta repeat occupies 326–366 (NGKCLTTYGYAPGSYVMIYDCTSAVAEATYWEIWDNGTIIN). N-linked (GlcNAc...) asparagine glycans are attached at residues Asn361 and Asn401. One copy of the 1-gamma repeat lies at 369–401 (SALVLSAESSSMGGTLTVQTNEYLMRQGWRTGN). Residues 403–527 (TSPFVTSISG…GKPNQIWLTL (125 aa)) form the Ricin B-type lectin 2 domain. The stretch at 414-449 (SDLCMQAQGSNVWMADCDSNKKEQQWALYTDGSIRS) is one 2-alpha repeat. Cystine bridges form between Cys417-Cys430 and Cys456-Cys473. The 2-beta repeat unit spans residues 453-492 (TNNCLTSKDHKQGSTILLMGCSNGWASQRWVFKNDGSIYS). The 2-gamma repeat unit spans residues 495–528 (DDMVMDVKGSDPSLKQIILWPYTGKPNQIWLTLF).

It in the N-terminal section; belongs to the ribosome-inactivating protein family. Type 2 RIP subfamily. As to quaternary structure, disulfide-linked dimer of A and B chains.

The enzyme catalyses Endohydrolysis of the N-glycosidic bond at one specific adenosine on the 28S rRNA.. Functionally, the A chain is responsible for inhibiting protein synthesis through the catalytic inactivation of 60S ribosomal subunits by removing adenine from position 4,324 of 28S rRNA. Abrin-a is more toxic than ricin. Its function is as follows. The B chain is a galactose-specific lectin that facilitates the binding of abrin to the cell membrane that precedes endocytosis. In Abrus precatorius (Indian licorice), this protein is Abrin-a.